A 137-amino-acid polypeptide reads, in one-letter code: Small ribosomal subunit protein uS12 (137 aa).

The tract at residues 1-55 (MPTINQLVRKPRKSKVEKSDSPALNKGYNSFKKTQTNVNSPQKRGVCTRVGTMTP) is disordered. Positions 27-42 (GYNSFKKTQTNVNSPQ) are enriched in polar residues. Asp102 carries the post-translational modification 3-methylthioaspartic acid.

The protein belongs to the universal ribosomal protein uS12 family. In terms of assembly, part of the 30S ribosomal subunit. Contacts proteins S8 and S17. May interact with IF1 in the 30S initiation complex.

In terms of biological role, with S4 and S5 plays an important role in translational accuracy. Functionally, interacts with and stabilizes bases of the 16S rRNA that are involved in tRNA selection in the A site and with the mRNA backbone. Located at the interface of the 30S and 50S subunits, it traverses the body of the 30S subunit contacting proteins on the other side and probably holding the rRNA structure together. The combined cluster of proteins S8, S12 and S17 appears to hold together the shoulder and platform of the 30S subunit. The chain is Small ribosomal subunit protein uS12 from Enterococcus faecalis (strain ATCC 700802 / V583).